A 148-amino-acid polypeptide reads, in one-letter code: FAD synthase (148 aa).

ATP-binding positions include 14–15 (VF), 19–22 (HVGH), and Asp100.

Belongs to the archaeal FAD synthase family. As to quaternary structure, homodimer. The cofactor is a divalent metal cation.

It carries out the reaction FMN + ATP + H(+) = FAD + diphosphate. The protein operates within cofactor biosynthesis; FAD biosynthesis; FAD from FMN: step 1/1. Catalyzes the transfer of the AMP portion of ATP to flavin mononucleotide (FMN) to produce flavin adenine dinucleotide (FAD) coenzyme. This Thermococcus sibiricus (strain DSM 12597 / MM 739) protein is FAD synthase.